Consider the following 359-residue polypeptide: 3-dehydroquinate synthase (359 aa).

Residues 106–110 (GVVGD), 130–131 (TS), lysine 143, and lysine 152 contribute to the NAD(+) site. Zn(2+) contacts are provided by glutamate 185, histidine 246, and histidine 262.

Belongs to the sugar phosphate cyclases superfamily. Dehydroquinate synthase family. NAD(+) is required as a cofactor. It depends on Co(2+) as a cofactor. Requires Zn(2+) as cofactor.

It is found in the cytoplasm. The enzyme catalyses 7-phospho-2-dehydro-3-deoxy-D-arabino-heptonate = 3-dehydroquinate + phosphate. Its pathway is metabolic intermediate biosynthesis; chorismate biosynthesis; chorismate from D-erythrose 4-phosphate and phosphoenolpyruvate: step 2/7. Its function is as follows. Catalyzes the conversion of 3-deoxy-D-arabino-heptulosonate 7-phosphate (DAHP) to dehydroquinate (DHQ). The sequence is that of 3-dehydroquinate synthase from Lactiplantibacillus plantarum (strain ATCC BAA-793 / NCIMB 8826 / WCFS1) (Lactobacillus plantarum).